Here is a 409-residue protein sequence, read N- to C-terminus: Serine/threonine transporter SstT (409 aa).

The next 9 helical transmembrane spans lie at 24–44 (LALGIVIGSVSPQLGLAAGLF), 48–68 (FVGALKAVAPVLVFILVAATI), 82–102 (IIVLYLIGTFSAALTAVIAGM), 142–162 (AIANANYIGILAWALVLGAAL), 194–214 (LGIFGLVSSTIAETGFGALAG), 218–238 (LLAVLLGCMAFIALAVNPAIV), 292–312 (IPLGATVNMGGAAITITVLAM), 319–339 (GIQVDFATALLLSLVATVSAC), and 365–385 (VAMQVVAVGFIIGVIQDSAET).

This sequence belongs to the dicarboxylate/amino acid:cation symporter (DAACS) (TC 2.A.23) family.

It is found in the cell inner membrane. It catalyses the reaction L-serine(in) + Na(+)(in) = L-serine(out) + Na(+)(out). The catalysed reaction is L-threonine(in) + Na(+)(in) = L-threonine(out) + Na(+)(out). Functionally, involved in the import of serine and threonine into the cell, with the concomitant import of sodium (symport system). The polypeptide is Serine/threonine transporter SstT (Neisseria gonorrhoeae (strain NCCP11945)).